The chain runs to 184 residues: Ribosome-recycling factor (184 aa).

Belongs to the RRF family.

The protein localises to the cytoplasm. In terms of biological role, responsible for the release of ribosomes from messenger RNA at the termination of protein biosynthesis. May increase the efficiency of translation by recycling ribosomes from one round of translation to another. This is Ribosome-recycling factor from Borreliella afzelii (strain PKo) (Borrelia afzelii).